Reading from the N-terminus, the 269-residue chain is Tryptophan synthase alpha chain (269 aa).

Active-site proton acceptor residues include glutamate 49 and aspartate 60.

This sequence belongs to the TrpA family. Tetramer of two alpha and two beta chains.

The enzyme catalyses (1S,2R)-1-C-(indol-3-yl)glycerol 3-phosphate + L-serine = D-glyceraldehyde 3-phosphate + L-tryptophan + H2O. It participates in amino-acid biosynthesis; L-tryptophan biosynthesis; L-tryptophan from chorismate: step 5/5. The alpha subunit is responsible for the aldol cleavage of indoleglycerol phosphate to indole and glyceraldehyde 3-phosphate. This chain is Tryptophan synthase alpha chain, found in Pseudomonas fluorescens (strain SBW25).